Reading from the N-terminus, the 532-residue chain is GH3 domain-containing protein (532 aa).

The signal sequence occupies residues Met-1–Ala-18. Residues Leu-100–Tyr-123 form a disordered region. N-linked (GlcNAc...) asparagine glycosylation is found at Asn-356 and Asn-451.

Belongs to the GH3 family. Highly expressed in mammary tissues from mature virgins and at day 13 of pregnancy, and at lower level during lactation. Expressed at intermediate level in liver. Expressed at lower level in kidney, heart and brain.

The protein resides in the endoplasmic reticulum. It localises to the nucleus envelope. In Mus musculus (Mouse), this protein is GH3 domain-containing protein (Ghdc).